A 251-amino-acid chain; its full sequence is Small ribosomal subunit protein uS2 (251 aa).

Belongs to the universal ribosomal protein uS2 family.

This Novosphingobium aromaticivorans (strain ATCC 700278 / DSM 12444 / CCUG 56034 / CIP 105152 / NBRC 16084 / F199) protein is Small ribosomal subunit protein uS2.